The sequence spans 434 residues: Protein translocase subunit SecY (434 aa).

The next 10 helical transmembrane spans lie at 19-39 (LFTL…IPGI), 73-93 (IFML…LLVY), 117-137 (YLTI…AKGI), 148-168 (YIFV…WFGE), 179-199 (TSLI…FNLF), 209-229 (VNPV…ILII), 264-284 (VLPV…LSGF), 300-320 (PNGF…TYFY), 362-382 (FSGS…QNIF), and 391-411 (IMGG…LIHI).

This sequence belongs to the SecY/SEC61-alpha family. As to quaternary structure, component of the Sec protein translocase complex. Heterotrimer consisting of SecY, SecE and SecG subunits. The heterotrimers can form oligomers, although 1 heterotrimer is thought to be able to translocate proteins. Interacts with the ribosome. Interacts with SecDF, and other proteins may be involved. Interacts with SecA.

Its subcellular location is the cell inner membrane. In terms of biological role, the central subunit of the protein translocation channel SecYEG. Consists of two halves formed by TMs 1-5 and 6-10. These two domains form a lateral gate at the front which open onto the bilayer between TMs 2 and 7, and are clamped together by SecE at the back. The channel is closed by both a pore ring composed of hydrophobic SecY resides and a short helix (helix 2A) on the extracellular side of the membrane which forms a plug. The plug probably moves laterally to allow the channel to open. The ring and the pore may move independently. In Borreliella burgdorferi (strain ATCC 35210 / DSM 4680 / CIP 102532 / B31) (Borrelia burgdorferi), this protein is Protein translocase subunit SecY.